A 683-amino-acid polypeptide reads, in one-letter code: Putative boron transporter 5 (683 aa).

Residues 1–38 are Cytoplasmic-facing; sequence MEEERVEGSKRPFQGIIRDVKGRALCYKQDWIAGLRSG. Residues 39-59 form a helical membrane-spanning segment; it reads FGILAPTTYVFFASALPVIAF. Residues 60–80 are Extracellular-facing; sequence GEQLSHDTERSLSTVETLAST. Residues 81–101 traverse the membrane as a helical segment; that stretch reads ALCGVIHSLLGGQPLLILGVA. Residues 102–126 are Cytoplasmic-facing; it reads EPTVLMYKYLYDFAKGRPELGKQLY. The helical transmembrane segment at 127–147 threads the bilayer; it reads LAWVAWVCVWTALLLFLMAIF. The Extracellular segment spans residues 148–158; it reads NMAYIINRFTR. The helical transmembrane segment at 159–179 threads the bilayer; it reads IAGELFGMLIAVLFLQQTIKG. The Cytoplasmic segment spans residues 180–200; the sequence is MVSEFRIPKGEDSKLEKYQFE. A helical membrane pass occupies residues 201–221; the sequence is WLYTNGLLGLIFTVGLVYTAL. The Extracellular portion of the chain corresponds to 222–238; that stretch reads KSRKARSWPYGTGCCRS. A helical membrane pass occupies residues 239-259; it reads FVADYGVPLMVVVWTALSFST. Residues 260–294 lie on the Cytoplasmic side of the membrane; sequence PSKLPSGVPRRLVSPLPWDSVSLTHWTVIKDMGKV. A helical membrane pass occupies residues 295-315; sequence SPGYIFAAFIPALMIAGLYFF. Over 316–335 the chain is Extracellular; that stretch reads DHSVVSQLAQQKEFNLKNPS. A helical membrane pass occupies residues 336-356; the sequence is AYHYDILLLGFMVLICGMLGL. Residues 357 to 477 lie on the Cytoplasmic side of the membrane; the sequence is PPSNGVLPQS…EQRVSNLLQS (121 aa). Residues 478-498 traverse the membrane as a helical segment; sequence LLVIGAVFALPVIKLIPTSLL. At 499–565 the chain is on the extracellular side; it reads WGYFAYMAID…QILYFGLCYG (67 aa). The helical transmembrane segment at 566-586 threads the bilayer; the sequence is VTWIPVAGIMFPVLFFLLVAI. Residues 587-683 are Cytoplasmic-facing; the sequence is RQYLLPKLFK…GDGDMSSSRE (97 aa).

The protein belongs to the anion exchanger (TC 2.A.31.3) family.

Its subcellular location is the membrane. Functionally, putative boron transporter. Boron is essential for maintaining the integrity of plants cell walls. The polypeptide is Putative boron transporter 5 (BOR5) (Arabidopsis thaliana (Mouse-ear cress)).